The sequence spans 23 residues: Basic phospholipase A2 CTs-G6 (23 aa).

Requires Ca(2+) as cofactor. In terms of processing, contains 7 disulfide bonds. In terms of tissue distribution, expressed by the venom gland.

The protein resides in the secreted. It carries out the reaction a 1,2-diacyl-sn-glycero-3-phosphocholine + H2O = a 1-acyl-sn-glycero-3-phosphocholine + a fatty acid + H(+). In terms of biological role, snake venom phospholipase A2 (PLA2) that induces local edema a few hours after injection (5-10 ug) in the hind paw. PLA2 catalyzes the calcium-dependent hydrolysis of the 2-acyl groups in 3-sn-phosphoglycerides. In Trimeresurus stejnegeri (Chinese green tree viper), this protein is Basic phospholipase A2 CTs-G6.